The following is a 426-amino-acid chain: tRNA methyltransferase 10 homolog C (426 aa).

Residues 1–41 (MPVLLKMSVSITFLRPFARVLVPFTLHRKRRVLYSTIMQRY) constitute a mitochondrion transit peptide. Position 86 is a phosphoserine (Ser-86). A coiled-coil region spans residues 138 to 166 (LYIKEKMKKARQIKKEMKKAEKEEPKKDQ). The 193-residue stretch at 193–385 (MGWKGAQAMQ…KFVPSRKHAG (193 aa)) folds into the SAM-dependent MTase TRM10-type domain.

It belongs to the class IV-like SAM-binding methyltransferase superfamily. TRM10 family. In terms of assembly, component of mitochondrial ribonuclease P, a complex composed of TRMT10C/MRPP1, HSD17B10/MRPP2 and PRORP/MRPP3. Interacts with HSD17B10/MRPP2; forming the MRPP1-MRPP2 subcomplex of the mitochondrial ribonuclease P complex. Interacts with GRSF1.

The protein resides in the mitochondrion matrix. It is found in the mitochondrion nucleoid. The enzyme catalyses adenosine(9) in tRNA + S-adenosyl-L-methionine = N(1)-methyladenosine(9) in tRNA + S-adenosyl-L-homocysteine + H(+). It carries out the reaction guanosine(9) in tRNA + S-adenosyl-L-methionine = N(1)-methylguanosine(9) in tRNA + S-adenosyl-L-homocysteine + H(+). It catalyses the reaction an adenosine in mRNA + S-adenosyl-L-methionine = an N(1)-methyladenosine in mRNA + S-adenosyl-L-homocysteine + H(+). Functionally, mitochondrial tRNA N(1)-methyltransferase involved in mitochondrial tRNA maturation. Component of mitochondrial ribonuclease P, a complex composed of TRMT10C/MRPP1, HSD17B10/MRPP2 and PRORP/MRPP3, which cleaves tRNA molecules in their 5'-ends. Together with HSD17B10/MRPP2, forms a subcomplex of the mitochondrial ribonuclease P, named MRPP1-MRPP2 subcomplex, which displays functions that are independent of the ribonuclease P activity. The MRPP1-MRPP2 subcomplex catalyzes the formation of N(1)-methylguanine and N(1)-methyladenine at position 9 (m1G9 and m1A9, respectively) in tRNAs; TRMT10C/MRPP1 acting as the catalytic N(1)-methyltransferase subunit. The MRPP1-MRPP2 subcomplex also acts as a tRNA maturation platform: following 5'-end cleavage by the mitochondrial ribonuclease P complex, the MRPP1-MRPP2 subcomplex enhances the efficiency of 3'-processing catalyzed by ELAC2, retains the tRNA product after ELAC2 processing and presents the nascent tRNA to the mitochondrial CCA tRNA nucleotidyltransferase TRNT1 enzyme. In addition to tRNA N(1)-methyltransferase activity, TRMT10C/MRPP1 also acts as a mRNA N(1)-methyltransferase by mediating methylation of adenosine residues at the N(1) position of MT-ND5 mRNA. Associates with mitochondrial DNA complexes at the nucleoids to initiate RNA processing and ribosome assembly. The chain is tRNA methyltransferase 10 homolog C from Bos taurus (Bovine).